The sequence spans 197 residues: Holliday junction branch migration complex subunit RuvA (197 aa).

The segment at 1–64 (MIASIRGILI…EDSLTLYGFE (64 aa)) is domain I. Residues 65–145 (TVEQRQLFET…GLPTGAAVTP (81 aa)) form a domain II region. Positions 146 to 148 (AVA) are flexible linker. The domain III stretch occupies residues 148–197 (AAANAELSEALISLGFTDAEAAAAIAALPSDAPPDLEERVRLALRYFSAS).

The protein belongs to the RuvA family. As to quaternary structure, homotetramer. Forms an RuvA(8)-RuvB(12)-Holliday junction (HJ) complex. HJ DNA is sandwiched between 2 RuvA tetramers; dsDNA enters through RuvA and exits via RuvB. An RuvB hexamer assembles on each DNA strand where it exits the tetramer. Each RuvB hexamer is contacted by two RuvA subunits (via domain III) on 2 adjacent RuvB subunits; this complex drives branch migration. In the full resolvosome a probable DNA-RuvA(4)-RuvB(12)-RuvC(2) complex forms which resolves the HJ.

The protein localises to the cytoplasm. The RuvA-RuvB-RuvC complex processes Holliday junction (HJ) DNA during genetic recombination and DNA repair, while the RuvA-RuvB complex plays an important role in the rescue of blocked DNA replication forks via replication fork reversal (RFR). RuvA specifically binds to HJ cruciform DNA, conferring on it an open structure. The RuvB hexamer acts as an ATP-dependent pump, pulling dsDNA into and through the RuvAB complex. HJ branch migration allows RuvC to scan DNA until it finds its consensus sequence, where it cleaves and resolves the cruciform DNA. The sequence is that of Holliday junction branch migration complex subunit RuvA from Roseiflexus sp. (strain RS-1).